Consider the following 212-residue polypeptide: MSLFDKKHLVSPADALPGRNTPMPVATLHAVNGHSMTNVPDGMEIAIFAMGCFWGVERLFWQLPGVYSTAAGYTGGYTPNPTYREVCSGDTGHAEAVRIVYDPSVISYEQLLQVFWENHDPAQGMRQGNDHGTQYRSAIYPLTPEQDAAARASLERFQAAMLAADDDRRITTEIANATPFYYAEDDHQQYLHKNPYGYCGICGIGVCLPPEA.

Cys-52 is a catalytic residue.

It belongs to the MsrA Met sulfoxide reductase family.

It carries out the reaction L-methionyl-[protein] + [thioredoxin]-disulfide + H2O = L-methionyl-(S)-S-oxide-[protein] + [thioredoxin]-dithiol. The enzyme catalyses [thioredoxin]-disulfide + L-methionine + H2O = L-methionine (S)-S-oxide + [thioredoxin]-dithiol. In terms of biological role, has an important function as a repair enzyme for proteins that have been inactivated by oxidation. Catalyzes the reversible oxidation-reduction of methionine sulfoxide in proteins to methionine. In Escherichia coli (strain SMS-3-5 / SECEC), this protein is Peptide methionine sulfoxide reductase MsrA.